A 135-amino-acid chain; its full sequence is NADPH-dependent 7-cyano-7-deazaguanine reductase (135 aa).

The active-site Thioimide intermediate is Cys-48. Residue Asp-55 is the Proton donor of the active site. Residues 70–72 (IEL) and 89–90 (HE) each bind substrate.

Belongs to the GTP cyclohydrolase I family. QueF type 1 subfamily.

It localises to the cytoplasm. The enzyme catalyses 7-aminomethyl-7-carbaguanine + 2 NADP(+) = 7-cyano-7-deazaguanine + 2 NADPH + 3 H(+). It participates in tRNA modification; tRNA-queuosine biosynthesis. Catalyzes the NADPH-dependent reduction of 7-cyano-7-deazaguanine (preQ0) to 7-aminomethyl-7-deazaguanine (preQ1). This chain is NADPH-dependent 7-cyano-7-deazaguanine reductase, found in Prochlorococcus marinus (strain MIT 9313).